The following is a 369-amino-acid chain: Variable large protein 7 (369 aa).

Residues 1–26 (MRKRISAIINKLNISIIIMTVVLMIG) form the signal peptide. Residue Cys27 is the site of N-palmitoyl cysteine attachment. Cys27 carries S-diacylglycerol cysteine lipidation.

Belongs to the variable large protein (Vlp) family. Alpha subfamily.

Its subcellular location is the cell outer membrane. Functionally, the Vlp and Vsp proteins are antigenically distinct proteins, only one vlp or vsp gene is transcriptionally active at any one time. Switching between these genes is a mechanism of host immune response evasion. This is Variable large protein 7 from Borrelia hermsii.